The sequence spans 586 residues: MSTGNPEASAAVGAYRSLVPAGLRRRVARRVPAGLRTVLKHLLRRLHVLSLASRLFRGFRARRRWPHLFREGERLAALAGHGDRIALVRPTVSPLGLREANLELVVTALEEAGVDYFAVRGTSDFRSVLAVAESDREQVGRALERCAGHGPVYLRACRGETPQARPALAGSRAGRQQARHAAVLRTGMVWSDPTGSLVLGLEHSCDIEFWKPEAGRLVAPRPNRVTQDVSPREPRVTVPVSRLTGFAALHTRRTRSVRTVAACADALPEDVRFPIDVVYTWVDGNDPAWRRRRSAYDGGYHAESANAARYISRDELRYSLRALEQNAPWVRHVHLVTDGQRPAWLNDSHPRLTVVDHSEIFADPAALPTFNSHAIESRLHHIKGLSEHFLYLNDDMFLGRPVTPQDFFLSNGMTRTFFSPSQVPRPDPSPADRPVDAAGKNNRRLLLENFGSVIVQKLRHAPYALRRSVLEEIEREYPEAHWETSHSRFRSPTDISIPSSLYHYYAYFTGRAVPSDIRFAYLDLARPEVARRLGILLARRDRQAFCINDTLSDGHDVDRQTEMLATFLSAYYPVPSPFERKERAAR.

It belongs to the stealth family.

The protein is Exopolysaccharide phosphotransferase SCO6023 of Streptomyces coelicolor (strain ATCC BAA-471 / A3(2) / M145).